The following is a 136-amino-acid chain: Galectin-7 (136 aa).

The Galectin domain occupies 6 to 136; the sequence is HKSSLPEGIR…DVQLDSVRIF (131 aa). Residue 70 to 76 coordinates a beta-D-galactoside; it reads WGREERG.

Monomer. Mainly expressed in stratified squamous epithelium.

It is found in the cytoplasm. It localises to the nucleus. The protein localises to the secreted. In terms of biological role, could be involved in cell-cell and/or cell-matrix interactions necessary for normal growth control. Pro-apoptotic protein that functions intracellularly upstream of JNK activation and cytochrome c release. In Homo sapiens (Human), this protein is Galectin-7 (LGALS7).